The primary structure comprises 76 residues: DNA-directed RNA polymerase subunit epsilon (76 aa).

The protein belongs to the RNA polymerase subunit epsilon family. In terms of assembly, RNAP is composed of a core of 2 alpha, a beta and a beta' subunit. The core is associated with a delta subunit, and at least one of epsilon or omega. When a sigma factor is associated with the core the holoenzyme is formed, which can initiate transcription.

It carries out the reaction RNA(n) + a ribonucleoside 5'-triphosphate = RNA(n+1) + diphosphate. Functionally, a non-essential component of RNA polymerase (RNAP). The chain is DNA-directed RNA polymerase subunit epsilon from Lactococcus lactis subsp. lactis (strain IL1403) (Streptococcus lactis).